The sequence spans 700 residues: Elongation factor G (700 aa).

The tr-type G domain maps to 10 to 286 (NKVRNIGIMA…AVIDYLPNPL (277 aa)). GTP is bound by residues 19–26 (AHIDAGKT), 83–87 (DTPGH), and 137–140 (NKMD).

Belongs to the TRAFAC class translation factor GTPase superfamily. Classic translation factor GTPase family. EF-G/EF-2 subfamily.

The protein localises to the cytoplasm. Its function is as follows. Catalyzes the GTP-dependent ribosomal translocation step during translation elongation. During this step, the ribosome changes from the pre-translocational (PRE) to the post-translocational (POST) state as the newly formed A-site-bound peptidyl-tRNA and P-site-bound deacylated tRNA move to the P and E sites, respectively. Catalyzes the coordinated movement of the two tRNA molecules, the mRNA and conformational changes in the ribosome. The protein is Elongation factor G of Rhodococcus jostii (strain RHA1).